A 456-amino-acid polypeptide reads, in one-letter code: Exodeoxyribonuclease 7 large subunit (456 aa).

The protein belongs to the XseA family. As to quaternary structure, heterooligomer composed of large and small subunits.

Its subcellular location is the cytoplasm. The enzyme catalyses Exonucleolytic cleavage in either 5'- to 3'- or 3'- to 5'-direction to yield nucleoside 5'-phosphates.. Its function is as follows. Bidirectionally degrades single-stranded DNA into large acid-insoluble oligonucleotides, which are then degraded further into small acid-soluble oligonucleotides. This is Exodeoxyribonuclease 7 large subunit from Lactobacillus delbrueckii subsp. bulgaricus (strain ATCC 11842 / DSM 20081 / BCRC 10696 / JCM 1002 / NBRC 13953 / NCIMB 11778 / NCTC 12712 / WDCM 00102 / Lb 14).